The chain runs to 234 residues: Ribosomal RNA large subunit methyltransferase E (234 aa).

Residues 1–37 (MSDDDRRRWKGPGPERQDSGRRSTERKVIARNARTES) are disordered. Residues glycine 91, tryptophan 93, aspartate 109, aspartate 125, and aspartate 149 each coordinate S-adenosyl-L-methionine. Lysine 189 (proton acceptor) is an active-site residue.

The protein belongs to the class I-like SAM-binding methyltransferase superfamily. RNA methyltransferase RlmE family.

The protein localises to the cytoplasm. The catalysed reaction is uridine(2552) in 23S rRNA + S-adenosyl-L-methionine = 2'-O-methyluridine(2552) in 23S rRNA + S-adenosyl-L-homocysteine + H(+). Functionally, specifically methylates the uridine in position 2552 of 23S rRNA at the 2'-O position of the ribose in the fully assembled 50S ribosomal subunit. This Hyphomonas neptunium (strain ATCC 15444) protein is Ribosomal RNA large subunit methyltransferase E.